A 348-amino-acid polypeptide reads, in one-letter code: UDP-3-O-acylglucosamine N-acyltransferase (348 aa).

The Proton acceptor role is filled by H257.

The protein belongs to the transferase hexapeptide repeat family. LpxD subfamily. In terms of assembly, homotrimer.

The catalysed reaction is a UDP-3-O-[(3R)-3-hydroxyacyl]-alpha-D-glucosamine + a (3R)-hydroxyacyl-[ACP] = a UDP-2-N,3-O-bis[(3R)-3-hydroxyacyl]-alpha-D-glucosamine + holo-[ACP] + H(+). It participates in bacterial outer membrane biogenesis; LPS lipid A biosynthesis. Catalyzes the N-acylation of UDP-3-O-acylglucosamine using 3-hydroxyacyl-ACP as the acyl donor. Is involved in the biosynthesis of lipid A, a phosphorylated glycolipid that anchors the lipopolysaccharide to the outer membrane of the cell. In Bartonella quintana (strain Toulouse) (Rochalimaea quintana), this protein is UDP-3-O-acylglucosamine N-acyltransferase.